A 214-amino-acid chain; its full sequence is Thymidylate kinase (214 aa).

7–14 (GIEGAGKT) is a binding site for ATP.

Belongs to the thymidylate kinase family.

It catalyses the reaction dTMP + ATP = dTDP + ADP. In terms of biological role, phosphorylation of dTMP to form dTDP in both de novo and salvage pathways of dTTP synthesis. The polypeptide is Thymidylate kinase (Desulfosudis oleivorans (strain DSM 6200 / JCM 39069 / Hxd3) (Desulfococcus oleovorans)).